Consider the following 189-residue polypeptide: Glycerol-3-phosphate acyltransferase 1 (189 aa).

A run of 5 helical transmembrane segments spans residues 12-32 (MQFLYLVASYLFGNILTAYIV), 61-81 (GYFVATFLGDAIKGAIVVSIA), 88-108 (FTFVMLTLLAVIMGHIYPMLF), 124-144 (IAFDYLIALTLVAVFIIFYLI), and 164-184 (ILYSYSIVTTILSALIIVLIL).

It belongs to the PlsY family. As to quaternary structure, probably interacts with PlsX.

It is found in the cell membrane. The enzyme catalyses an acyl phosphate + sn-glycerol 3-phosphate = a 1-acyl-sn-glycero-3-phosphate + phosphate. It functions in the pathway lipid metabolism; phospholipid metabolism. Functionally, catalyzes the transfer of an acyl group from acyl-phosphate (acyl-PO(4)) to glycerol-3-phosphate (G3P) to form lysophosphatidic acid (LPA). This enzyme utilizes acyl-phosphate as fatty acyl donor, but not acyl-CoA or acyl-ACP. In Bacillus anthracis, this protein is Glycerol-3-phosphate acyltransferase 1.